Consider the following 198-residue polypeptide: MEHYISLLIKSIFIENMALSFFLGMCTFLAVSKKVKTSFGLGVAVVVVLTIAVPVNNLVYNLVLKENALVEGVDLSFLNFITFIGVIAALVQILEMILDRFFPPLYNALGIFLPLITVNCAIFGGVSFMVQRDYNFAESVVYGFGAGVGWMLAIVALAGIREKMKYSDVPPGLRGLGITFITVGLMALGFMSFSGVQL.

A run of 6 helical transmembrane segments spans residues 11–31 (SIFI…FLAV), 39–59 (FGLG…NNLV), 77–97 (FLNF…LEMI), 110–130 (GIFL…SFMV), 140–160 (VVYG…LAGI), and 176–196 (LGIT…FSGV).

Belongs to the NqrDE/RnfAE family. Composed of six subunits; NqrA, NqrB, NqrC, NqrD, NqrE and NqrF.

The protein resides in the cell inner membrane. It catalyses the reaction a ubiquinone + n Na(+)(in) + NADH + H(+) = a ubiquinol + n Na(+)(out) + NAD(+). NQR complex catalyzes the reduction of ubiquinone-1 to ubiquinol by two successive reactions, coupled with the transport of Na(+) ions from the cytoplasm to the periplasm. NqrA to NqrE are probably involved in the second step, the conversion of ubisemiquinone to ubiquinol. This Vibrio vulnificus (strain CMCP6) protein is Na(+)-translocating NADH-quinone reductase subunit E.